Reading from the N-terminus, the 1077-residue chain is Adenylate cyclase type 4 (1077 aa).

The Cytoplasmic portion of the chain corresponds to 1–28 (MARLFSPRPPPSEDLFYETYYSLSQQYP). Transmembrane regions (helical) follow at residues 29-50 (LLLLLLGIVLCALAALLAVAWA), 61-80 (FLTTVLCALGGFSLLLGLAS), 94-117 (GLVWVALLALGHAFLFTGGVVSAW), 120-138 (VSYFLFVIFTAYAMLPLGM), 141-162 (AAVAGLASSLSHLLVLGLYLGP), and 170-190 (LLPQLAANAVLFLCGNVAGVY). The Cytoplasmic portion of the chain corresponds to 191–585 (HKALMERALR…YRLSAIPAFK (395 aa)). Mg(2+)-binding residues include Asp278, Ile279, and Asp322. ATP-binding positions include 278 to 283 (DIVGFT), 320 to 322 (LGD), and Arg366. Position 520 is a phosphoserine (Ser520). At Thr536 the chain carries Phosphothreonine. The next 3 helical transmembrane spans lie at 586–607 (YYEACTFLVFLSNFIIQMLVTN), 611–633 (ALAITYSITFLLFLLILFVCFSE), and 664–687 (IALGTATILLVFAMAITSLFFFPT). Over 688–714 (SSDCPFQAPNVSSMISNLSWELPGSLP) the chain is Extracellular. N-linked (GlcNAc...) asparagine glycosylation is found at Asn697 and Asn704. A run of 3 helical transmembrane segments spans residues 715 to 736 (LISVPYSMHCCTLGFLSCSLFL), 744 to 764 (LLLLLLWLAASCSLFLHSHAW), and 791 to 807 (MGAISFFIFFFTLLVLA). Residues 808-1077 (RQNEYYCRLD…RTGPPSATLG (270 aa)) lie on the Cytoplasmic side of the membrane. Residues Lys925, 1005–1007 (DIW), 1012–1016 (NVASR), and Lys1052 each bind ATP.

It belongs to the adenylyl cyclase class-4/guanylyl cyclase family. The cofactor is Mg(2+). Mn(2+) is required as a cofactor. Detected in the zona glomerulosa and the zona fasciculata in the adrenal gland (at protein level).

It is found in the cell membrane. It localises to the cytoplasm. The enzyme catalyses ATP = 3',5'-cyclic AMP + diphosphate. Its activity is regulated as follows. Activated by forskolin. Insensitive to calcium/calmodulin. Stimulated by GNAS and by the G-protein beta and gamma subunit complex. In terms of biological role, catalyzes the formation of the signaling molecule cAMP in response to G-protein signaling. In Homo sapiens (Human), this protein is Adenylate cyclase type 4 (ADCY4).